A 176-amino-acid polypeptide reads, in one-letter code: Nucleoside triphosphate/diphosphate phosphatase (176 aa).

R23 functions as the Proton donor in the catalytic mechanism. Mg(2+)-binding residues include N87, D103, D105, D107, D120, and E123.

Belongs to the Ntdp family. Requires Mg(2+) as cofactor.

The catalysed reaction is a ribonucleoside 5'-triphosphate + H2O = a ribonucleoside 5'-diphosphate + phosphate + H(+). It carries out the reaction a ribonucleoside 5'-diphosphate + H2O = a ribonucleoside 5'-phosphate + phosphate + H(+). Functionally, has nucleoside phosphatase activity towards nucleoside triphosphates and nucleoside diphosphates. This Bacillus subtilis (strain 168) protein is Nucleoside triphosphate/diphosphate phosphatase (ygaC).